A 374-amino-acid polypeptide reads, in one-letter code: Trehalose-phosphate phosphatase B (374 aa).

This sequence belongs to the trehalose phosphatase family. A divalent metal cation serves as cofactor. In terms of tissue distribution, expressed in flowers.

The catalysed reaction is alpha,alpha-trehalose 6-phosphate + H2O = alpha,alpha-trehalose + phosphate. Its pathway is glycan biosynthesis; trehalose biosynthesis. Removes the phosphate from trehalose 6-phosphate to produce free trehalose. Trehalose accumulation in plant may improve abiotic stress tolerance. In Arabidopsis thaliana (Mouse-ear cress), this protein is Trehalose-phosphate phosphatase B (TPPB).